The primary structure comprises 119 residues: Circadian clock oscillator protein KaiB (119 aa).

The protein belongs to the KaiB family. The KaiABC complex composition changes during the circadian cycle to control KaiC phosphorylation. Complexes KaiC(6), KaiA(2-4):KaiC(6), KaiB(6):KaiC(6) and KaiC(6):KaiB(6):KaiA(12) are among the most important forms, many form cooperatively. Undergoes a major conformational rearrangment; in the free state forms homotetramers as a dimer of dimers. When bound to the CI domain of KaiC switches to a monomeric thioredoxin-fold (KaiB(fs)). KaiB(fs) binds CikA, leading it to dephosphorylate phospho-RpaA.

Its function is as follows. Key component of the KaiABC oscillator complex, which constitutes the main circadian regulator in cyanobacteria. Complex composition changes during the circadian cycle to control KaiC phosphorylation. KaiA stimulates KaiC autophosphorylation, while KaiB sequesters KaiA, leading to KaiC autodephosphorylation. Phospho-Ser-431 KaiC accumulation triggers binding of KaiB to form the KaiB(6):KaiC(6) complex, leading to changes in output regulators CikA and SasA. KaiB switches to a thioredoxin-like fold (KaiB(fs)) when bound to KaiC. KaiB(6):KaiC(6) formation exposes a site for KaiA binding that sequesters KaiA from KaiC, making the KaiC(6):KaiB(6):KaiA(12) complex that results in KaiC autodephosphorylation. In terms of biological role, a metamorphic protein which reversibly switches between an inactive tetrameric fold and a rare, thioredoxin-like monomeric fold (KaiB(fs)). KaiB(fs) binds phospho-KaiC, KaiA and CikA. KaiA and CikA compete for binding to KaiB(fs), and KaiB(fs) and SasA compete for binding to KaiC, thus the clock oscillator and output signal pathway are tightly coupled. This Synechococcus sp. (strain CC9311) protein is Circadian clock oscillator protein KaiB.